Consider the following 227-residue polypeptide: Cytochrome c oxidase subunit 2 (227 aa).

Topologically, residues 1–14 (MAYPFQLGLQDASS) are mitochondrial intermembrane. A helical transmembrane segment spans residues 15-45 (PIMEELMNFHDHTLMIVFLISSLVLYLMALM). Residues 46–59 (LSTKLIHTSTMDAQ) lie on the Mitochondrial matrix side of the membrane. The helical transmembrane segment at 60–87 (EVETIWTILPAIILIMIALPSLRILYMM) threads the bilayer. Residues 88-227 (DEINNPILTV…LFENWSMSMT (140 aa)) are Mitochondrial intermembrane-facing. Cu cation is bound by residues His161, Cys196, Glu198, Cys200, His204, and Met207. Glu198 contributes to the Mg(2+) binding site.

It belongs to the cytochrome c oxidase subunit 2 family. As to quaternary structure, component of the cytochrome c oxidase (complex IV, CIV), a multisubunit enzyme composed of 14 subunits. The complex is composed of a catalytic core of 3 subunits MT-CO1, MT-CO2 and MT-CO3, encoded in the mitochondrial DNA, and 11 supernumerary subunits COX4I, COX5A, COX5B, COX6A, COX6B, COX6C, COX7A, COX7B, COX7C, COX8 and NDUFA4, which are encoded in the nuclear genome. The complex exists as a monomer or a dimer and forms supercomplexes (SCs) in the inner mitochondrial membrane with NADH-ubiquinone oxidoreductase (complex I, CI) and ubiquinol-cytochrome c oxidoreductase (cytochrome b-c1 complex, complex III, CIII), resulting in different assemblies (supercomplex SCI(1)III(2)IV(1) and megacomplex MCI(2)III(2)IV(2)). Found in a complex with TMEM177, COA6, COX18, COX20, SCO1 and SCO2. Interacts with TMEM177 in a COX20-dependent manner. Interacts with COX20. Interacts with COX16. Cu cation is required as a cofactor.

The protein localises to the mitochondrion inner membrane. It carries out the reaction 4 Fe(II)-[cytochrome c] + O2 + 8 H(+)(in) = 4 Fe(III)-[cytochrome c] + 2 H2O + 4 H(+)(out). In terms of biological role, component of the cytochrome c oxidase, the last enzyme in the mitochondrial electron transport chain which drives oxidative phosphorylation. The respiratory chain contains 3 multisubunit complexes succinate dehydrogenase (complex II, CII), ubiquinol-cytochrome c oxidoreductase (cytochrome b-c1 complex, complex III, CIII) and cytochrome c oxidase (complex IV, CIV), that cooperate to transfer electrons derived from NADH and succinate to molecular oxygen, creating an electrochemical gradient over the inner membrane that drives transmembrane transport and the ATP synthase. Cytochrome c oxidase is the component of the respiratory chain that catalyzes the reduction of oxygen to water. Electrons originating from reduced cytochrome c in the intermembrane space (IMS) are transferred via the dinuclear copper A center (CU(A)) of subunit 2 and heme A of subunit 1 to the active site in subunit 1, a binuclear center (BNC) formed by heme A3 and copper B (CU(B)). The BNC reduces molecular oxygen to 2 water molecules using 4 electrons from cytochrome c in the IMS and 4 protons from the mitochondrial matrix. The sequence is that of Cytochrome c oxidase subunit 2 (MT-CO2) from Gerbillus gerbillus (Lesser Egyptian gerbil).